Consider the following 335-residue polypeptide: DNA-directed RNA polymerases I and III subunit RPAC1 (335 aa).

At serine 2 the chain carries N-acetylserine. Serine 17 bears the Phosphoserine mark.

Belongs to the archaeal Rpo3/eukaryotic RPB3 RNA polymerase subunit family. As to quaternary structure, component of the RNA polymerase I (Pol I) complex consisting of 14 subunits: RPA135, RPA190, RPC40, RPA14, RPB5, RPO26, RPA43, RPB8, RPA12, RPB10, RPC19, RPC10, RPA49 and RPA34. The complex is composed of a horseshoe-shaped core containing ten subunits (RPA135, RPA190, RPB5, RPO26, RPB8, RPB10, RPC10, RPA12, RPC19 and RPC40) where RPA135 and RPA190 form the DNA-binding cleft. Outside of the core, RPA14 and RPA43 form the stalk that mediates interactions with transcription initiation factors and newly synthesized RNA. Component of the RNA polymerase III (Pol III) complex consisting of at least 17 subunits. Interacts with the RPC19/RPAC2 and RPC53/RPC4. Interacts with retrotransposons Ty integrase, targeting Ty1, Ty2 and Ty4 integration upstream of pol III-transcribed genes.

It localises to the nucleus. It is found in the nucleolus. Functionally, DNA-dependent RNA polymerases catalyze the transcription of DNA into RNA using the four ribonucleoside triphosphates as substrates. Common component of RNA polymerases I (Pol I) and III (Pol III) which synthesize ribosomal RNA precursors and small RNAs, such as 5S rRNA and tRNAs, respectively. RPC40 is part of the polymerase core and may function as a clamp element that moves to open and close the cleft. Plays an important role in targeting retrotransposons Ty integration upstream of pol III-transcribed genes such as tRNA genes, allowing Ty1, Ty2 and Ty4 to proliferate and yet minimizing genetic damage. The chain is DNA-directed RNA polymerases I and III subunit RPAC1 from Saccharomyces cerevisiae (strain ATCC 204508 / S288c) (Baker's yeast).